The sequence spans 782 residues: Coiled-coil alpha-helical rod protein 1 (782 aa).

2 stretches are compositionally biased toward basic and acidic residues: residues glutamate 62–arginine 74 and glutamate 208–leucine 218. 2 disordered regions span residues glutamate 62–glutamate 82 and glutamate 177–leucine 218. Coiled coils occupy residues glutamate 82–arginine 314, leucine 344–serine 437, and valine 498–glycine 691.

It is found in the cytoplasm. Its subcellular location is the nucleus. Its function is as follows. May be a regulator of keratinocyte proliferation or differentiation. The protein is Coiled-coil alpha-helical rod protein 1 (CCHCR1) of Pan troglodytes (Chimpanzee).